Reading from the N-terminus, the 158-residue chain is MNKVPLTEKGAQQLREELQELKTVVRPKVVTAIAEARAHGDLKENAEYHAAREEQGFVEGRIRDLEHQLAHAQIIDVSKLQKDGRVVFGVTVDLVNIETDEEASYQIVGDLEANIKENKISINSPIARALIGKREGDEIQVQAPSGIILYEIAAIGYQ.

Residues 1–26 (MNKVPLTEKGAQQLREELQELKTVVR) adopt a coiled-coil conformation.

The protein belongs to the GreA/GreB family.

In terms of biological role, necessary for efficient RNA polymerase transcription elongation past template-encoded arresting sites. The arresting sites in DNA have the property of trapping a certain fraction of elongating RNA polymerases that pass through, resulting in locked ternary complexes. Cleavage of the nascent transcript by cleavage factors such as GreA or GreB allows the resumption of elongation from the new 3'terminus. GreA releases sequences of 2 to 3 nucleotides. This is Transcription elongation factor GreA from Nitrosococcus oceani (strain ATCC 19707 / BCRC 17464 / JCM 30415 / NCIMB 11848 / C-107).